We begin with the raw amino-acid sequence, 151 residues long: UPF0756 membrane protein Moth_0120 (151 aa).

4 helical membrane-spanning segments follow: residues valine 6–alanine 26, alanine 52–proline 72, methionine 75–threonine 95, and methionine 111–valine 131.

The protein belongs to the UPF0756 family.

The protein resides in the cell membrane. The chain is UPF0756 membrane protein Moth_0120 from Moorella thermoacetica (strain ATCC 39073 / JCM 9320).